The primary structure comprises 214 residues: ATP-dependent dethiobiotin synthetase BioD (214 aa).

10–15 contributes to the ATP binding site; that stretch reads GIGKTY. T14 lines the Mg(2+) pocket. The active site involves K35. T39 lines the substrate pocket. Residues D44, 109–112, and 169–170 contribute to the ATP site; these read EGAG and NC. Residues D44 and E109 each coordinate Mg(2+).

This sequence belongs to the dethiobiotin synthetase family. Homodimer. The cofactor is Mg(2+).

It localises to the cytoplasm. It catalyses the reaction (7R,8S)-7,8-diammoniononanoate + CO2 + ATP = (4R,5S)-dethiobiotin + ADP + phosphate + 3 H(+). Its pathway is cofactor biosynthesis; biotin biosynthesis; biotin from 7,8-diaminononanoate: step 1/2. Catalyzes a mechanistically unusual reaction, the ATP-dependent insertion of CO2 between the N7 and N8 nitrogen atoms of 7,8-diaminopelargonic acid (DAPA, also called 7,8-diammoniononanoate) to form a ureido ring. This Methanocaldococcus jannaschii (strain ATCC 43067 / DSM 2661 / JAL-1 / JCM 10045 / NBRC 100440) (Methanococcus jannaschii) protein is ATP-dependent dethiobiotin synthetase BioD.